A 206-amino-acid chain; its full sequence is Transmembrane emp24 domain-containing protein bai (206 aa).

A signal peptide spans 1–17 (MAKATFFYFLFIGYVWP). Topologically, residues 18-172 (IDSVMFNLAP…RDTNEKTNSR (155 aa)) are lumenal. In terms of domain architecture, GOLD spans 30-140 (QKCLKEDIQA…LKPLEVDLKR (111 aa)). A helical transmembrane segment spans residues 173-193 (VLFFSIFSMCCLLGLATWQVL). At 194–206 (YLRRYFKAKKLIE) the chain is on the cytoplasmic side.

It belongs to the EMP24/GP25L family.

The protein localises to the membrane. In terms of biological role, eca and bai are essential, though not redundant, for dorsoventral patterning of the embryo. Specifically required during early embryogenesis for the activity of maternal tkv, while the zygotic tkv is not affected. This is Transmembrane emp24 domain-containing protein bai from Drosophila persimilis (Fruit fly).